Here is a 366-residue protein sequence, read N- to C-terminus: Putative integrase/recombinase HI_1572 (366 aa).

In terms of domain architecture, Core-binding (CB) spans 54–133 (ITLDELIDKY…SLSALMAKTI (80 aa)). A Tyr recombinase domain is found at 168–331 (IFVSGYDVEH…DMAEGYKTKA (164 aa)). Active-site residues include Arg-201, Lys-226, and His-308. The active-site O-(3'-phospho-DNA)-tyrosine intermediate is Tyr-318.

The protein belongs to the 'phage' integrase family.

The protein is Putative integrase/recombinase HI_1572 of Haemophilus influenzae (strain ATCC 51907 / DSM 11121 / KW20 / Rd).